A 91-amino-acid chain; its full sequence is Uteroglobin (91 aa).

A signal peptide spans 1-21 (MKLAITITLAILALCCSPASA).

This sequence belongs to the secretoglobin family. As to quaternary structure, antiparallel homodimer; disulfide-linked. Interaction with LMBR1L is controversial. As to expression, club cells (nonciliated cells of the surface epithelium of the pulmonary airways). Expressed in lung, uterus, and prostate.

The protein resides in the secreted. In terms of biological role, binds phosphatidylcholine, phosphatidylinositol, polychlorinated biphenyls (PCB) and weakly progesterone, potent inhibitor of phospholipase A2. The chain is Uteroglobin (SCGB1A1) from Equus caballus (Horse).